The following is a 502-amino-acid chain: Lysine--tRNA ligase (502 aa).

Mg(2+) contacts are provided by E413 and E420.

It belongs to the class-II aminoacyl-tRNA synthetase family. In terms of assembly, homodimer. The cofactor is Mg(2+).

The protein localises to the cytoplasm. It catalyses the reaction tRNA(Lys) + L-lysine + ATP = L-lysyl-tRNA(Lys) + AMP + diphosphate. This is Lysine--tRNA ligase from Haemophilus influenzae (strain 86-028NP).